Consider the following 447-residue polypeptide: Probable ribonuclease FAU-1 (447 aa).

The disordered stretch occupies residues 424 to 447; it reads PEAPGGKICTPEGLTSAPPRSSSA.

This sequence belongs to the FAU-1 family.

Its function is as follows. Probable RNase involved in rRNA stability through maturation and/or degradation of precursor rRNAs. Binds to RNA in loop regions with AU-rich sequences. The sequence is that of Probable ribonuclease FAU-1 from Pyrobaculum neutrophilum (strain DSM 2338 / JCM 9278 / NBRC 100436 / V24Sta) (Thermoproteus neutrophilus).